The following is an 89-amino-acid chain: EADLALGKAVFDGNCAACHAGGGNNVIPDHTLQKAAIEQFLDGGFNIEAIVYQIENGKGAMPAWDGRLDEDEIAGVAAYVYDQAAGNKW.

Heme c-binding residues include cysteine 15, cysteine 18, histidine 19, and methionine 61.

Belongs to the cytochrome c family. PetJ subfamily. Monomer. In terms of processing, binds 1 heme c group covalently per subunit.

Its subcellular location is the plastid. It is found in the chloroplast thylakoid lumen. In terms of biological role, functions as an electron carrier between membrane-bound cytochrome b6-f and photosystem I in oxygenic photosynthesis. This Chlorolobion braunii (Green alga) protein is Cytochrome c6 (petJ).